Reading from the N-terminus, the 319-residue chain is MQNKDACKSLSSWVSLSISLLVLTVPLIWPYNSTAFPIYAQQNYESPREATGRIVCANCHLAKKAVDIEVPQAVLPDTVFEAVVKIPYDTQIKQVLSNGKKGGLNVGAVLILPEGFELAPSDRIPPELKEKISNIYFQPYSPEKKNILVVGPLPGNKYSELVFPILSPDPATNKKASFLKYPIYLGGNRGRGQVYPDGSKSNNNVFSASTAGTISQITRQKKGGYEVIIKTTDGREVTDIIPPGPELIVSEGESIKADQLLTNNPNVGGFGQADAEIVLQDPLRIQGLLVFFASVILAQIFLVLKKKQFEKVQLAEMNF.

The N-terminal stretch at 1 to 35 (MQNKDACKSLSSWVSLSISLLVLTVPLIWPYNSTA) is a signal peptide. Heme is bound by residues Phe-36, Cys-56, Cys-59, and His-60. Residues 285–305 (IQGLLVFFASVILAQIFLVLK) form a helical membrane-spanning segment.

It belongs to the cytochrome f family. The 4 large subunits of the cytochrome b6-f complex are cytochrome b6, subunit IV (17 kDa polypeptide, petD), cytochrome f and the Rieske protein, while the 4 small subunits are PetG, PetL, PetM and PetN. The complex functions as a dimer. The cofactor is heme.

The protein resides in the plastid. It localises to the chloroplast thylakoid membrane. Component of the cytochrome b6-f complex, which mediates electron transfer between photosystem II (PSII) and photosystem I (PSI), cyclic electron flow around PSI, and state transitions. The polypeptide is Cytochrome f (Staurastrum punctulatum (Green alga)).